The following is a 33-amino-acid chain: Mu/delta-theraphotoxin-Pm2a (33 aa).

3 cysteine pairs are disulfide-bonded: cysteine 2–cysteine 16, cysteine 9–cysteine 21, and cysteine 15–cysteine 27. At phenylalanine 33 the chain carries Phenylalanine amide.

Expressed by the venom gland.

Its subcellular location is the secreted. Functionally, gating-modifier toxin with very weak activity on Nav1.7/SCN9A and Nav1.8/SCN10A. Shows 22% peak current inhibition (at 10 uM) on Nav1.8/SCN10A sodium channels. Show peak current inhibition and delays fast inactivation on Nav1.7/SCN9A (EC(50)&gt;10 uM). This Poecilotheria metallica (Metallic blue ornamental tree spider) protein is Mu/delta-theraphotoxin-Pm2a.